The primary structure comprises 69 residues: Large ribosomal subunit protein uL29 (69 aa).

It belongs to the universal ribosomal protein uL29 family.

In Synechococcus sp. (strain CC9902), this protein is Large ribosomal subunit protein uL29.